A 365-amino-acid polypeptide reads, in one-letter code: DNA replication and repair protein RecF (365 aa).

ATP is bound at residue glycine 30–threonine 37.

This sequence belongs to the RecF family.

The protein resides in the cytoplasm. The RecF protein is involved in DNA metabolism; it is required for DNA replication and normal SOS inducibility. RecF binds preferentially to single-stranded, linear DNA. It also seems to bind ATP. The chain is DNA replication and repair protein RecF from Parabacteroides distasonis (strain ATCC 8503 / DSM 20701 / CIP 104284 / JCM 5825 / NCTC 11152).